A 311-amino-acid chain; its full sequence is ATP synthase gamma chain (311 aa).

Cysteine 67 and cysteine 138 are oxidised to a cystine.

Belongs to the ATPase gamma chain family. In terms of assembly, F-type ATPases have 2 components, CF(1) - the catalytic core - and CF(0) - the membrane proton channel. CF(1) has five subunits: alpha(3), beta(3), gamma(1), delta(1), epsilon(1). CF(0) has three main subunits: a, b and c.

The protein localises to the cellular thylakoid membrane. Thiol-modulation by raising the activation threshold of the enzyme upon oxidation of the cysteines, thereby preventing wasteful ATP-hydrolysis. Produces ATP from ADP in the presence of a proton gradient across the membrane. The gamma chain is believed to be important in regulating ATPase activity and the flow of protons through the CF(0) complex. The chain is ATP synthase gamma chain (atpG) from Arthrospira platensis (Spirulina platensis).